Reading from the N-terminus, the 297-residue chain is MKNSLQGAMTALITPFKNQKLDEASFEKLIKRQIKHGIDVVVPVGTTGESATLTHDEHRICIEIAVDACKGTNVKVLAGAGSNATHEAIGIAKFAQAHGAHGILSVAPYYNKPTQEGLYEHYKAIANSIEIPVLLYNVPGRVGVDILPATVFRLFKDCKNIYGIKEATGSIDRCVDLLAHEPDLVVISGEDAINYPILSNGGKGVISVTANLLPDQISQLTHLAMNEEYKKAKLINDNLYTINKTLFCESNPIPIKAAMYLAGLIDTLEYRLPLCKPSKENFKKIEEVIKNYEIKGF.

Threonine 47 is a binding site for pyruvate. Tyrosine 136 serves as the catalytic Proton donor/acceptor. Lysine 165 acts as the Schiff-base intermediate with substrate in catalysis. Isoleucine 206 contributes to the pyruvate binding site.

It belongs to the DapA family. As to quaternary structure, homotetramer; dimer of dimers.

It is found in the cytoplasm. It carries out the reaction L-aspartate 4-semialdehyde + pyruvate = (2S,4S)-4-hydroxy-2,3,4,5-tetrahydrodipicolinate + H2O + H(+). Its pathway is amino-acid biosynthesis; L-lysine biosynthesis via DAP pathway; (S)-tetrahydrodipicolinate from L-aspartate: step 3/4. In terms of biological role, catalyzes the condensation of (S)-aspartate-beta-semialdehyde [(S)-ASA] and pyruvate to 4-hydroxy-tetrahydrodipicolinate (HTPA). This chain is 4-hydroxy-tetrahydrodipicolinate synthase, found in Campylobacter concisus (strain 13826).